A 162-amino-acid chain; its full sequence is Beta-lactoglobulin-3 (162 aa).

2 disulfide bridges follow: cysteine 66–cysteine 160 and cysteine 106–cysteine 119.

It belongs to the calycin superfamily. Lipocalin family. As to quaternary structure, monomer.

The protein resides in the secreted. In terms of biological role, lactoglobulin is the primary component of whey, it binds retinol and is probably involved in the transport of that molecule. The protein is Beta-lactoglobulin-3 (LGB3) of Felis catus (Cat).